Consider the following 219-residue polypeptide: 7-cyano-7-deazaguanine synthase (219 aa).

10-20 (FSGGQDSTTCL) serves as a coordination point for ATP. Residues C188, C197, C200, and C203 each contribute to the Zn(2+) site.

It belongs to the QueC family. Homodimer. Zn(2+) is required as a cofactor.

It catalyses the reaction 7-carboxy-7-deazaguanine + NH4(+) + ATP = 7-cyano-7-deazaguanine + ADP + phosphate + H2O + H(+). It participates in purine metabolism; 7-cyano-7-deazaguanine biosynthesis. Its function is as follows. Catalyzes the ATP-dependent conversion of 7-carboxy-7-deazaguanine (CDG) to 7-cyano-7-deazaguanine (preQ(0)). The sequence is that of 7-cyano-7-deazaguanine synthase from Clostridium botulinum (strain Langeland / NCTC 10281 / Type F).